Here is a 262-residue protein sequence, read N- to C-terminus: uncharacterized protein (262 aa).

A divalent metal cation contacts are provided by His-7, His-9, Glu-96, His-132, His-156, and Asp-211.

Belongs to the metallo-dependent hydrolases superfamily. TatD-type hydrolase family. A divalent metal cation is required as a cofactor.

This is an uncharacterized protein from Mycoplasma genitalium (strain ATCC 33530 / DSM 19775 / NCTC 10195 / G37) (Mycoplasmoides genitalium).